The chain runs to 476 residues: Homeobox even-skipped homolog protein 2 (476 aa).

Disordered regions lie at residues 82–113 and 142–185; these read TGSE…AEAD and KGYA…GSGA. Composition is skewed to low complexity over residues 84–96 and 147–159; these read SEST…SSAA and SGSA…SASG. Over residues 160–183 the composition is skewed to gly residues; that stretch reads SGLGSLHGGSGGSGGSAALGGSGS. The homeobox DNA-binding region spans 188-247; the sequence is VRRYRTAFTREQIARLEKEFYRENYVSRPRRCELAAALNLPETTIKVWFQNRRMKDKRQR.

This sequence belongs to the even-skipped homeobox family.

The protein localises to the nucleus. The chain is Homeobox even-skipped homolog protein 2 (EVX2) from Homo sapiens (Human).